A 233-amino-acid polypeptide reads, in one-letter code: Phosphoribosylaminoimidazole-succinocarboxamide synthase (233 aa).

It belongs to the SAICAR synthetase family.

It catalyses the reaction 5-amino-1-(5-phospho-D-ribosyl)imidazole-4-carboxylate + L-aspartate + ATP = (2S)-2-[5-amino-1-(5-phospho-beta-D-ribosyl)imidazole-4-carboxamido]succinate + ADP + phosphate + 2 H(+). It participates in purine metabolism; IMP biosynthesis via de novo pathway; 5-amino-1-(5-phospho-D-ribosyl)imidazole-4-carboxamide from 5-amino-1-(5-phospho-D-ribosyl)imidazole-4-carboxylate: step 1/2. This is Phosphoribosylaminoimidazole-succinocarboxamide synthase from Staphylococcus saprophyticus subsp. saprophyticus (strain ATCC 15305 / DSM 20229 / NCIMB 8711 / NCTC 7292 / S-41).